Reading from the N-terminus, the 873-residue chain is uncharacterized protein (873 aa).

7 disordered regions span residues 1 to 24 (MSNK…SMSK), 175 to 251 (SSAV…TSIS), 375 to 423 (PSRH…AKKP), 506 to 540 (DSES…ATRS), 568 to 592 (DQSS…APEY), 662 to 773 (ANDS…TSQI), and 822 to 855 (ANPY…EEPI). Basic and acidic residues predominate over residues 211–225 (KDSDRSQTKNTHEET). Basic residues predominate over residues 376–385 (SRHHSHRKKE). Residues 574–586 (PGRHFGKTGRSHF) are compositionally biased toward basic residues. Residues 665–686 (SPNSSESLESLNNQSYSSSPYS) show a composition bias toward low complexity. Polar residues predominate over residues 698 to 740 (QSLNDSPQTSDFKASNLNDSSSNVHSIFQTRETTSPSVQNKTP). Residues 743–755 (YHRELKSSKDGHE) show a composition bias toward basic and acidic residues. Residues 758–773 (SPLVSSSPSGSFTSQI) are compositionally biased toward low complexity. Residues 823 to 855 (NPYSTNNDGNPSNNTSDVEVNETSMNDNSEEPI) are compositionally biased toward polar residues.

The protein localises to the cytoplasm. The protein resides in the vacuole membrane. This is an uncharacterized protein from Schizosaccharomyces pombe (strain 972 / ATCC 24843) (Fission yeast).